The sequence spans 136 residues: uncharacterized protein (136 aa).

Residues 40–62 (LFYSISLCVSLLLHISLCVSVYV) form a helical membrane-spanning segment.

Its subcellular location is the membrane. This is an uncharacterized protein from Homo sapiens (Human).